A 151-amino-acid polypeptide reads, in one-letter code: Probable chemoreceptor glutamine deamidase CheD (151 aa).

This sequence belongs to the CheD family.

The enzyme catalyses L-glutaminyl-[protein] + H2O = L-glutamyl-[protein] + NH4(+). Probably deamidates glutamine residues to glutamate on methyl-accepting chemotaxis receptors (MCPs), playing an important role in chemotaxis. This Methanosarcina barkeri (strain Fusaro / DSM 804) protein is Probable chemoreceptor glutamine deamidase CheD.